Consider the following 306-residue polypeptide: Curved DNA-binding protein (306 aa).

The J domain occupies 5–69 (DYYAIMGVKP…QRRAEYDQLW (65 aa)).

Its subcellular location is the cytoplasm. The protein resides in the nucleoid. In terms of biological role, DNA-binding protein that preferentially recognizes a curved DNA sequence. It is probably a functional analog of DnaJ; displays overlapping activities with DnaJ, but functions under different conditions, probably acting as a molecular chaperone in an adaptive response to environmental stresses other than heat shock. Lacks autonomous chaperone activity; binds native substrates and targets them for recognition by DnaK. Its activity is inhibited by the binding of CbpM. In Salmonella choleraesuis (strain SC-B67), this protein is Curved DNA-binding protein.